Here is a 220-residue protein sequence, read N- to C-terminus: Pyridoxine/pyridoxamine 5'-phosphate oxidase (220 aa).

FMN-binding positions include 49-54 (RMVLLK), 68-69 (YT), lysine 75, and glutamine 97. Lysine 54 is a binding site for substrate. Substrate is bound by residues tyrosine 115, arginine 119, and serine 123. FMN-binding positions include 132–133 (QS) and tryptophan 176. 182–184 (RLH) serves as a coordination point for substrate. Position 186 (arginine 186) interacts with FMN.

The protein belongs to the pyridoxamine 5'-phosphate oxidase family. In terms of assembly, homodimer. FMN is required as a cofactor.

It carries out the reaction pyridoxamine 5'-phosphate + O2 + H2O = pyridoxal 5'-phosphate + H2O2 + NH4(+). The enzyme catalyses pyridoxine 5'-phosphate + O2 = pyridoxal 5'-phosphate + H2O2. Its pathway is cofactor metabolism; pyridoxal 5'-phosphate salvage; pyridoxal 5'-phosphate from pyridoxamine 5'-phosphate: step 1/1. It functions in the pathway cofactor metabolism; pyridoxal 5'-phosphate salvage; pyridoxal 5'-phosphate from pyridoxine 5'-phosphate: step 1/1. Catalyzes the oxidation of either pyridoxine 5'-phosphate (PNP) or pyridoxamine 5'-phosphate (PMP) into pyridoxal 5'-phosphate (PLP). In Paracoccus denitrificans (strain Pd 1222), this protein is Pyridoxine/pyridoxamine 5'-phosphate oxidase.